The primary structure comprises 258 residues: Spindlin-2 (258 aa).

The tract at residues 1–47 (MKTPHKKATARQQTREIVDDHTLSASMRKKKISQKKQRGRPSSQTRR) is disordered. Residues 13 to 22 (QTREIVDDHT) show a composition bias toward basic and acidic residues. Basic residues predominate over residues 27 to 39 (MRKKKISQKKQRG). Tudor-like domain regions lie at residues 50–99 (VGCR…LELH), 129–178 (IGKA…YQLL), and 210–255 (IGKH…YDLV). Histone H3K4me3 and H3R8me2a binding regions lie at residues Glu138 and 246 to 248 (DFH).

Belongs to the SPIN/STSY family. Interacts with C11orf84/SPINDOC.

The protein localises to the nucleus. Functionally, may be involved in the regulation of cell cycle progression. Exhibits H3K4me3-binding activity. The polypeptide is Spindlin-2 (SPIN2) (Bos taurus (Bovine)).